Reading from the N-terminus, the 2171-residue chain is DExH-box ATP-dependent RNA helicase DExH12 (2171 aa).

Disordered regions lie at residues 24–80, 218–267, and 383–426; these read SLVL…KERD, EENE…NEGT, and TAKE…ESGW. Composition is skewed to basic and acidic residues over residues 31 to 40 and 50 to 80; these read NRPRDTHEPT and IDPRSFGDRVAKGRPQELEDKLKKSKKKERD. Positions 218 to 242 are enriched in acidic residues; that stretch reads EENEEDDEESDPDMVEEDDDEEDDE. Basic and acidic residues predominate over residues 383 to 423; sequence TAKEREENLQKSINEEARRLKDETGGDGGRGRRDVADRDSE. In terms of domain architecture, Helicase ATP-binding 1 spans 514–697; sequence DTALFKAENI…FLRVDLKKGL (184 aa). An ATP-binding site is contributed by 527 to 534; sequence APTGAGKT. The DEIH box signature appears at 639-642; the sequence is DEIH. The region spanning 731 to 941 is the Helicase C-terminal 1 domain; sequence LCYQKVLAGA…GTVQNAREAC (211 aa). Positions 1006–1308 constitute an SEC63 1 domain; sequence TDLGRIASYY…WLGSETVLPV (303 aa). Residues 1360–1537 form the Helicase ATP-binding 2 domain; it reads TVLYNTNDNV…WIGASSHGLF (178 aa). 1373-1380 is a binding site for ATP; that stretch reads APTGSGKT. Residues 1479–1482 carry the DELH box motif; it reads DELH. A Helicase C-terminal 2 domain is found at 1574–1779; the sequence is AIVQHAKNKK…GVIENKQDAV (206 aa). The SEC63 2 domain occupies 1839–2157; it reads PLNLGMIASY…LGCDQEYSFS (319 aa).

This sequence belongs to the DExH box helicase family. Interacts with CLO.

The protein localises to the nucleus. The catalysed reaction is ATP + H2O = ADP + phosphate + H(+). In terms of biological role, RNA helicase that plays an essential role in pre-mRNA splicing as component of the U5 snRNP and U4/U6-U5 tri-snRNP complexes. Involved in spliceosome assembly, activation and disassembly. The sequence is that of DExH-box ATP-dependent RNA helicase DExH12 from Arabidopsis thaliana (Mouse-ear cress).